Here is a 339-residue protein sequence, read N- to C-terminus: Undecaprenyl-phosphate 4-deoxy-4-formamido-L-arabinose transferase (339 aa).

A run of 2 helical transmembrane segments spans residues 235–255 (LSLV…FLLV) and 269–289 (LFVL…GMGL).

This sequence belongs to the glycosyltransferase 2 family.

It localises to the cell inner membrane. The enzyme catalyses UDP-4-deoxy-4-formamido-beta-L-arabinose + di-trans,octa-cis-undecaprenyl phosphate = 4-deoxy-4-formamido-alpha-L-arabinopyranosyl di-trans,octa-cis-undecaprenyl phosphate + UDP. Its pathway is glycolipid biosynthesis; 4-amino-4-deoxy-alpha-L-arabinose undecaprenyl phosphate biosynthesis; 4-amino-4-deoxy-alpha-L-arabinose undecaprenyl phosphate from UDP-4-deoxy-4-formamido-beta-L-arabinose and undecaprenyl phosphate: step 1/2. The protein operates within bacterial outer membrane biogenesis; lipopolysaccharide biosynthesis. In terms of biological role, catalyzes the transfer of 4-deoxy-4-formamido-L-arabinose from UDP to undecaprenyl phosphate. The modified arabinose is attached to lipid A and is required for resistance to polymyxin and cationic antimicrobial peptides. This chain is Undecaprenyl-phosphate 4-deoxy-4-formamido-L-arabinose transferase, found in Pseudomonas aeruginosa (strain UCBPP-PA14).